A 998-amino-acid polypeptide reads, in one-letter code: Calcium-transporting ATPase 3, endoplasmic reticulum-type (998 aa).

Over M1 to P48 the chain is Cytoplasmic. The chain crosses the membrane as a helical span at residues F49–A69. At I70–E89 the chain is on the lumenal side. Residues P90 to T109 traverse the membrane as a helical segment. Residues N110 to L250 are Cytoplasmic-facing. Residues D251–V270 form a helical membrane-spanning segment. Over V271–Y291 the chain is Lumenal. The helical transmembrane segment at F292–A309 threads the bilayer. Ca(2+) is bound by residues V300, A301, I303, and E305. Topologically, residues V310–T746 are cytoplasmic. D347 acts as the 4-aspartylphosphate intermediate in catalysis. Residues D692 and D696 each contribute to the Mg(2+) site. The chain crosses the membrane as a helical span at residues K747–V766. Ca(2+) is bound by residues N757 and E760. Residues A767 to L776 lie on the Lumenal side of the membrane. The chain crosses the membrane as a helical span at residues A777–G797. Ca(2+) contacts are provided by N785, T788, and D789. At F798–V817 the chain is on the cytoplasmic side. The helical transmembrane segment at V818–G840 threads the bilayer. Over F841–S883 the chain is Lumenal. The chain crosses the membrane as a helical span at residues T884–S903. E894 contacts Ca(2+). The Cytoplasmic portion of the chain corresponds to E904 to N916. A helical transmembrane segment spans residues L917–Y935. Over V936–W950 the chain is Lumenal. Residues A951 to K971 traverse the membrane as a helical segment. Topologically, residues F972–K998 are cytoplasmic.

This sequence belongs to the cation transport ATPase (P-type) (TC 3.A.3) family. Type IIA subfamily. As to expression, expressed in root cap, in elongation and differentiation zones of roots, in vascular tissues of roots, leaves, floral pedicels and style, in leaves, including hydathodes and guard cells, in stamens, in petals, in sepals and in siliques.

Its subcellular location is the golgi apparatus membrane. It is found in the endosome membrane. The protein localises to the prevacuolar compartment membrane. The catalysed reaction is Ca(2+)(in) + ATP + H2O = Ca(2+)(out) + ADP + phosphate + H(+). Functionally, this magnesium-dependent enzyme catalyzes the hydrolysis of ATP coupled with the translocation of calcium from the cytosol to an endomembrane compartment. Involved in calcium-enhanced root growth, in tolerance to toxic levels of manganese and in secretory processes. Has a crucial role in manganese nutrition, but is not involved in transporting copper, iron or zinc. In Arabidopsis thaliana (Mouse-ear cress), this protein is Calcium-transporting ATPase 3, endoplasmic reticulum-type.